The primary structure comprises 78 residues: Large ribosomal subunit protein bL28 (78 aa).

The tract at residues 1–20 is disordered; the sequence is MSRVCQVTGKRPVTGNNRSH.

Belongs to the bacterial ribosomal protein bL28 family.

This is Large ribosomal subunit protein bL28 from Photobacterium profundum (strain SS9).